A 323-amino-acid polypeptide reads, in one-letter code: MDPKFQRVALSDGHFIPVLGFGTYAPEEVPKSKAMEATKIAIDAGFRHIDSAYFYKNEKEVGLAIRSKIADGTVKREDIFYTSKLWCTFHRPELVRPSLEDSLKNLQLDYVDLYIIHFPTALKPGVEIIPTDEHGKAIFDTVDICATWEAMEKCKDAGLAKSIGVSNFNRRQLEMILNKPGLKYKPVCNQVECHPYLNQGKLLEFCKSKGIVLVAYSALGSHREPEWVDQSAPVLLEDPLIGALAKKHQQTPALIALRYQLQRGIVVLAKSFTEKRIKENIQVFEFQLPSEDMKVIDSLNRNFRYVTADFAIGHPNYPFSDEY.

NADP(+)-binding positions include 23–24 and D50; that span reads TY. Substrate is bound at residue Y24. The Proton donor role is filled by Y55. H117 contributes to the substrate binding site. NADP(+) is bound by residues 166-167, Q190, 216-221, and 270-280; these read SN, YSALGS, and KSFTEKRIKEN.

This sequence belongs to the aldo/keto reductase family.

The protein resides in the cytoplasm. The catalysed reaction is prostaglandin F2alpha + NADP(+) = prostaglandin E2 + NADPH + H(+). It catalyses the reaction (17R,20S)-17,20-dihydroxypregn-4-en-3-one + NADP(+) = 17alpha-hydroxyprogesterone + NADPH + H(+). It carries out the reaction (17R,20S)-17,20-dihydroxypregn-4-en-3-one + NAD(+) = 17alpha-hydroxyprogesterone + NADH + H(+). Can convert prostaglandin E2 to prostaglandin F2-alpha. The chain is Prostaglandin-E(2) 9-reductase (AKR1C5) from Oryctolagus cuniculus (Rabbit).